The chain runs to 154 residues: UPF0260 protein NTHI1811 (154 aa).

Belongs to the UPF0260 family.

The sequence is that of UPF0260 protein NTHI1811 from Haemophilus influenzae (strain 86-028NP).